The chain runs to 359 residues: DNA polymerase IV (359 aa).

Residues 7–188 (IIHIDMDAFY…LPIGKFFGVG (182 aa)) form the UmuC domain. Mg(2+) contacts are provided by D11 and D106. E107 is a catalytic residue.

This sequence belongs to the DNA polymerase type-Y family. As to quaternary structure, monomer. It depends on Mg(2+) as a cofactor.

Its subcellular location is the cytoplasm. The enzyme catalyses DNA(n) + a 2'-deoxyribonucleoside 5'-triphosphate = DNA(n+1) + diphosphate. Functionally, poorly processive, error-prone DNA polymerase involved in untargeted mutagenesis. Copies undamaged DNA at stalled replication forks, which arise in vivo from mismatched or misaligned primer ends. These misaligned primers can be extended by PolIV. Exhibits no 3'-5' exonuclease (proofreading) activity. May be involved in translesional synthesis, in conjunction with the beta clamp from PolIII. In Clostridium perfringens (strain SM101 / Type A), this protein is DNA polymerase IV.